The following is a 484-amino-acid chain: Ureidoglycolate hydrolase (484 aa).

A signal peptide spans 1 to 28 (MATSAAARFLAALAGAAVLLVLLGGAAG). Mn(2+)-binding residues include His148, Asp159, Glu194, and His262. Substrate regions lie at residues 193 to 194 (EE) and 262 to 265 (HIEQ). Positions 284 to 399 (APASIKVEFE…LSEFKIINQD (116 aa)) are involved in dimerization. His298, Asn348, and Arg361 together coordinate substrate. Residues 431–432 (YH) form a substrate region. A Mn(2+)-binding site is contributed by His456. His456 lines the substrate pocket.

Belongs to the peptidase M20 family. Homodimer. Requires Mn(2+) as cofactor. The cofactor is Ni(2+). It depends on Co(2+) as a cofactor.

Its subcellular location is the endoplasmic reticulum. The catalysed reaction is (S)-ureidoglycolate + H2O + 2 H(+) = glyoxylate + 2 NH4(+) + CO2. It participates in nitrogen metabolism; (S)-allantoin degradation; glyoxylate from (S)-ureidoglycolate: step 1/1. Involved in the catabolism of purine nucleotides. The sequential activity of AAH, UGLYAH and UAH allows a complete purine breakdown without the intermediate generation of urea. This Oryza sativa subsp. japonica (Rice) protein is Ureidoglycolate hydrolase.